An 87-amino-acid chain; its full sequence is RNA-binding protein Hfq (87 aa).

Residues 9–68 (DPFLNALRRERIPVSIFLVNGIKLQGKIQSFDQFVILLENTVNQMVYKHAISTVVPARAV) form the Sm domain.

This sequence belongs to the Hfq family. Homohexamer.

RNA chaperone that binds small regulatory RNA (sRNAs) and mRNAs to facilitate mRNA translational regulation in response to envelope stress, environmental stress and changes in metabolite concentrations. Also binds with high specificity to tRNAs. This Pseudoalteromonas translucida (strain TAC 125) protein is RNA-binding protein Hfq.